We begin with the raw amino-acid sequence, 430 residues long: Gamma-glutamyl phosphate reductase (430 aa).

Belongs to the gamma-glutamyl phosphate reductase family.

The protein resides in the cytoplasm. It carries out the reaction L-glutamate 5-semialdehyde + phosphate + NADP(+) = L-glutamyl 5-phosphate + NADPH + H(+). Its pathway is amino-acid biosynthesis; L-proline biosynthesis; L-glutamate 5-semialdehyde from L-glutamate: step 2/2. Functionally, catalyzes the NADPH-dependent reduction of L-glutamate 5-phosphate into L-glutamate 5-semialdehyde and phosphate. The product spontaneously undergoes cyclization to form 1-pyrroline-5-carboxylate. In Psychrobacter arcticus (strain DSM 17307 / VKM B-2377 / 273-4), this protein is Gamma-glutamyl phosphate reductase.